Consider the following 130-residue polypeptide: Small ribosomal subunit protein uS8 (130 aa).

This sequence belongs to the universal ribosomal protein uS8 family. As to quaternary structure, part of the 30S ribosomal subunit. Contacts proteins S5 and S12.

Its function is as follows. One of the primary rRNA binding proteins, it binds directly to 16S rRNA central domain where it helps coordinate assembly of the platform of the 30S subunit. This chain is Small ribosomal subunit protein uS8, found in Coxiella burnetii (strain Dugway 5J108-111).